A 106-amino-acid chain; its full sequence is UPF0145 protein SCO3412 (106 aa).

The protein belongs to the UPF0145 family.

This is UPF0145 protein SCO3412 from Streptomyces coelicolor (strain ATCC BAA-471 / A3(2) / M145).